Here is a 157-residue protein sequence, read N- to C-terminus: dCTP deaminase (157 aa).

Residues 79 to 84, Asp95, Gln124, and Tyr138 contribute to the dCTP site; that span reads RSSLAR.

The protein belongs to the dCTP deaminase family. In terms of assembly, homotrimer.

It catalyses the reaction dCTP + H2O + H(+) = dUTP + NH4(+). It participates in pyrimidine metabolism; dUMP biosynthesis; dUMP from dCTP (dUTP route): step 1/2. Catalyzes the deamination of dCTP to dUTP. This chain is dCTP deaminase, found in Thermococcus gammatolerans (strain DSM 15229 / JCM 11827 / EJ3).